A 442-amino-acid polypeptide reads, in one-letter code: MANIDERLFVTLAKQLGEYKKILVGFSGGLDSSVLLHLLVNWRNQHNQKIQLRAIHIHHGLNLKADQWIEHCQLICDDWQVEFHSARVTIDARQKGIEAAARDARYQVFKSELQKDEVLVTAQHLDDQAETFLLALKRGSGPAGLASMPSIAVFADTLLLRPLLDYSRNELEKYASKHRLNWIEDDSNQDDRYDRNFLRLHIMPLLNQRWSHFPKAAARSASLCGEQEQLLDELLNESLKELITQDGALGIVSLAVCSEAKRNALLRRWFGYHGMKMPSREQLNRLWYEVALARTDAEPRLQFGKYDVRRYKQKLWLVPQWQSLRETILEWDICNTLVLPDRLGELNIADRGIQVRVPADNERVTIRFGVQGMISIVGRQHSRHSKKLWQELGVAPWLRERIPLLYYNEQLIAALGVFVTKESEAAEGRKMLTMNWHKTLLK.

Ser27 to Ser32 serves as a coordination point for ATP.

Belongs to the tRNA(Ile)-lysidine synthase family.

Its subcellular location is the cytoplasm. It carries out the reaction cytidine(34) in tRNA(Ile2) + L-lysine + ATP = lysidine(34) in tRNA(Ile2) + AMP + diphosphate + H(+). In terms of biological role, ligates lysine onto the cytidine present at position 34 of the AUA codon-specific tRNA(Ile) that contains the anticodon CAU, in an ATP-dependent manner. Cytidine is converted to lysidine, thus changing the amino acid specificity of the tRNA from methionine to isoleucine. This chain is tRNA(Ile)-lysidine synthase, found in Photorhabdus laumondii subsp. laumondii (strain DSM 15139 / CIP 105565 / TT01) (Photorhabdus luminescens subsp. laumondii).